A 401-amino-acid polypeptide reads, in one-letter code: Multidrug resistance protein MdtH (401 aa).

11 helical membrane-spanning segments follow: residues 13–33 (YFLL…FPLI), 34–54 (SIRF…ALGL), 99–116 (PWIL…GTLF), 139–159 (LLMM…SWLL), 165–185 (FVCW…AWLL), 214–234 (VLTL…LPIV), 243–263 (AAVK…LYPL), 277–297 (LMAG…ITHL), 299–319 (TLFM…PARE), 340–360 (LGLA…YDTG), and 368–388 (LPWF…YWQF).

Belongs to the major facilitator superfamily. DHA1 family. MdtH (TC 2.A.1.2.21) subfamily.

Its subcellular location is the cell inner membrane. This chain is Multidrug resistance protein MdtH, found in Yersinia pseudotuberculosis serotype O:1b (strain IP 31758).